Here is a 547-residue protein sequence, read N- to C-terminus: Elongator complex protein 3 (547 aa).

Positions 82-372 (RTASGIAVVA…YRVQRDIPMP (291 aa)) constitute a Radical SAM core domain. Residues cysteine 99, cysteine 109, and cysteine 112 each contribute to the [4Fe-4S] cluster site. Serine 161 carries the phosphoserine modification. Acetyl-CoA is bound at residue lysine 164. Lysine 229 carries the post-translational modification N6-methyllysine. Residue tyrosine 251 is modified to Phosphotyrosine. In terms of domain architecture, N-acetyltransferase spans 396-547 (IQCRDVRTRE…QGPYMVKMLK (152 aa)). Acetyl-CoA is bound by residues 474–477 (ELHV), 497–499 (FGM), and tyrosine 530.

The protein belongs to the ELP3 family. Component of the elongator complex which consists of ELP1, ELP2, ELP3, ELP4, ELP5 and ELP6. ELP1, ELP2 and ELP3 form the elongator core complex. Interacts with alpha-tubulin. The cofactor is [4Fe-4S] cluster. Tyrosine-phosphorylated. Also serine/threonine-phosphorylated.

It localises to the cytoplasm. It is found in the nucleus. It carries out the reaction uridine(34) in tRNA + acetyl-CoA + S-adenosyl-L-methionine + H2O = 5-(carboxymethyl)uridine(34) in tRNA + 5'-deoxyadenosine + L-methionine + CoA + 2 H(+). Its pathway is tRNA modification; 5-methoxycarbonylmethyl-2-thiouridine-tRNA biosynthesis. Catalytic tRNA acetyltransferase subunit of the elongator complex which is required for multiple tRNA modifications, including mcm5U (5-methoxycarbonylmethyl uridine), mcm5s2U (5-methoxycarbonylmethyl-2-thiouridine), and ncm5U (5-carbamoylmethyl uridine). In the elongator complex, acts as a tRNA uridine(34) acetyltransferase by mediating formation of carboxymethyluridine in the wobble base at position 34 in tRNAs. May also act as a protein lysine acetyltransferase by mediating acetylation of target proteins; such activity is however unclear in vivo and recent evidences suggest that ELP3 primarily acts as a tRNA acetyltransferase. Involved in neurogenesis: regulates the migration and branching of projection neurons in the developing cerebral cortex, through a process depending on alpha-tubulin acetylation. Required for acetylation of GJA1 in the developing cerebral cortex. The sequence is that of Elongator complex protein 3 from Mus musculus (Mouse).